The primary structure comprises 192 residues: Peptidyl-tRNA hydrolase (192 aa).

The active-site Proton acceptor is the His19. TRNA contacts are provided by Tyr64, Asn66, and Asn112.

It belongs to the PTH family. Monomer.

The protein resides in the cytoplasm. It carries out the reaction an N-acyl-L-alpha-aminoacyl-tRNA + H2O = an N-acyl-L-amino acid + a tRNA + H(+). Hydrolyzes ribosome-free peptidyl-tRNAs (with 1 or more amino acids incorporated), which drop off the ribosome during protein synthesis, or as a result of ribosome stalling. Its function is as follows. Catalyzes the release of premature peptidyl moieties from peptidyl-tRNA molecules trapped in stalled 50S ribosomal subunits, and thus maintains levels of free tRNAs and 50S ribosomes. The chain is Peptidyl-tRNA hydrolase from Acidiphilium cryptum (strain JF-5).